A 408-amino-acid polypeptide reads, in one-letter code: LL-diaminopimelate aminotransferase (408 aa).

Substrate contacts are provided by Y15 and G42. Residues Y72, 108 to 109, Y132, N187, Y218, and 246 to 248 contribute to the pyridoxal 5'-phosphate site; these read SK and SFS. Substrate is bound by residues K109, Y132, and N187. K249 is modified (N6-(pyridoxal phosphate)lysine). R257 and N292 together coordinate pyridoxal 5'-phosphate. Substrate-binding residues include N292 and R388.

This sequence belongs to the class-I pyridoxal-phosphate-dependent aminotransferase family. LL-diaminopimelate aminotransferase subfamily. Homodimer. It depends on pyridoxal 5'-phosphate as a cofactor.

The enzyme catalyses (2S,6S)-2,6-diaminopimelate + 2-oxoglutarate = (S)-2,3,4,5-tetrahydrodipicolinate + L-glutamate + H2O + H(+). The protein operates within amino-acid biosynthesis; L-lysine biosynthesis via DAP pathway; LL-2,6-diaminopimelate from (S)-tetrahydrodipicolinate (aminotransferase route): step 1/1. Its function is as follows. Involved in the synthesis of meso-diaminopimelate (m-DAP or DL-DAP), required for both lysine and peptidoglycan biosynthesis. Catalyzes the direct conversion of tetrahydrodipicolinate to LL-diaminopimelate. The sequence is that of LL-diaminopimelate aminotransferase from Prochlorococcus marinus (strain AS9601).